We begin with the raw amino-acid sequence, 140 residues long: Hexon-interlacing protein (140 aa).

A coiled-coil region spans residues 100–127 (LTALLAQLDSLTRELNVVSQQLLDLRQQ).

This sequence belongs to the adenoviridae hexon-interlacing protein family. As to quaternary structure, homotrimer. Interacts with hexon protein; this interaction tethers the hexons together. Self-interacts with adjacent proteins. Interacts with kinesin light chain KLC1; this interaction leads to capsid disruption at the nuclear pore complex during virus entry into host cell.

Its subcellular location is the virion. The protein localises to the host nucleus. Its function is as follows. Structural component of the virion that acts as a cement protein on the capsid exterior and forms triskelion structures consisting of three molecules that stabilize three hexon trimers at the center of each icosahedral facet and fixes the peripentonal hexons. Dispensable for assembly. During virus entry, recruits the anterograde motor kinesin-1 to the capsid docked at the nuclear pore complex thereby subjecting the docked capsid to a pulling force. The resulting tension leads to capsid disruption, dispersion of capsid fragments toward cell periphery and eventually viral DNA entry into the host nucleus. The chain is Hexon-interlacing protein from Human adenovirus C serotype 5 (HAdV-5).